We begin with the raw amino-acid sequence, 2304 residues long: Protein Ycf2 (2304 aa).

1637-1644 is an ATP binding site; that stretch reads GSIGTGRS.

It belongs to the Ycf2 family.

The protein resides in the plastid. Its subcellular location is the chloroplast stroma. In terms of biological role, probable ATPase of unknown function. Its presence in a non-photosynthetic plant (Epifagus virginiana) and experiments in tobacco indicate that it has an essential function which is probably not related to photosynthesis. This chain is Protein Ycf2, found in Amborella trichopoda.